Here is a 509-residue protein sequence, read N- to C-terminus: H/ACA ribonucleoprotein complex subunit DKC1 (509 aa).

Residues 1 to 24 (MADAEVITFPKKHKKKKDRKPLQE) are disordered. At A2 the chain carries N-acetylalanine. The interval 2–21 (ADAEVITFPKKHKKKKDRKP) is nucleolar localization. Residues 10-19 (PKKHKKKKDR) show a composition bias toward basic residues. Glycyl lysine isopeptide (Lys-Gly) (interchain with G-Cter in SUMO2) cross-links involve residues K20, K39, and K43. D125 acts as the Nucleophile in catalysis. K191 is covalently cross-linked (Glycyl lysine isopeptide (Lys-Gly) (interchain with G-Cter in SUMO2)). The 76-residue stretch at 297 to 372 (KRLVMKDSAV…VAKIKRVIME (76 aa)) folds into the PUA domain. S387 carries the post-translational modification Phosphoserine. K394 is covalently cross-linked (Glycyl lysine isopeptide (Lys-Gly) (interchain with G-Cter in SUMO2)). K413 participates in a covalent cross-link: Glycyl lysine isopeptide (Lys-Gly) (interchain with G-Cter in SUMO1); alternate. A Glycyl lysine isopeptide (Lys-Gly) (interchain with G-Cter in SUMO2); alternate cross-link involves residue K413. A Glycyl lysine isopeptide (Lys-Gly) (interchain with G-Cter in SUMO2) cross-link involves residue K424. A nuclear and nucleolar localization region spans residues 446–509 (KRKRDSESES…KVKVVEEMSE (64 aa)). The disordered stretch occupies residues 447–509 (RKRDSESESD…KVKVVEEMSE (63 aa)). Phosphoserine is present on residues S451, S453, and S455. T458 carries the phosphothreonine modification. Positions 466–476 (EKKKKKDKKPK) are enriched in basic residues. The residue at position 481 (S481) is a Phosphoserine. T485 carries the post-translational modification Phosphothreonine. At S508 the chain carries Phosphoserine.

This sequence belongs to the pseudouridine synthase TruB family. Part of the H/ACA small nucleolar ribonucleoprotein (H/ACA snoRNP) complex, which contains NHP2/NOLA2, GAR1/NOLA1, NOP10/NOLA3, and DKC1/NOLA4, which is presumed to be the catalytic subunit. The complex contains a stable core formed by binding of one or two NOP10-DKC1 heterodimers to NHP2; GAR1 subsequently binds to this core via DKC1. The complex binds a box H/ACA small nucleolar RNA (snoRNA), which may target the specific site of modification within the RNA substrate. During assembly, the complex contains NAF1 instead of GAR1/NOLA1. The complex also interacts with TERC, which contains a 3'-terminal domain related to the box H/ACA snoRNAs. Specific interactions with snoRNAs or TERC are mediated by GAR1 and NHP2. Associates with NOLC1/NOPP140. H/ACA snoRNPs interact with the SMN complex, consisting of SMN1 or SMN2, GEMIN2/SIP1, DDX20/GEMIN3, and GEMIN4. This is mediated by interaction between GAR1 and SMN1 or SMN2. The SMN complex may be required for correct assembly of the H/ACA snoRNP complex. Component of the telomerase holoenzyme complex composed of one molecule of TERT, one molecule of WRAP53/TCAB1, two molecules of H/ACA ribonucleoprotein complex subunits DKC1, NOP10, NHP2 and GAR1, and a telomerase RNA template component (TERC). The telomerase holoenzyme complex is associated with TEP1, SMG6/EST1A and POT1. Interacts with SHQ1; this interaction may lead to the stabilization of DKC1, from the time of its synthesis until its association with NOP10, NHP2, and NAF1 at the nascent H/ACA RNA. Interacts with HMBOX1. Interacts with DHX36. Ubiquitously expressed, with elevated levels in Purkinje cells, the olfactory bulb, and Leydig cells of the testis.

It localises to the nucleus. Its subcellular location is the nucleolus. The protein resides in the cajal body. The catalysed reaction is uridine in 5S rRNA = pseudouridine in 5S rRNA. Functionally, catalytic subunit of H/ACA small nucleolar ribonucleoprotein (H/ACA snoRNP) complex, which catalyzes pseudouridylation of rRNA. This involves the isomerization of uridine such that the ribose is subsequently attached to C5, instead of the normal N1. Each rRNA can contain up to 100 pseudouridine ('psi') residues, which may serve to stabilize the conformation of rRNAs. Required for ribosome biogenesis and telomere maintenance. Also required for correct processing or intranuclear trafficking of TERC, the RNA component of the telomerase reverse transcriptase (TERT) holoenzyme. This is H/ACA ribonucleoprotein complex subunit DKC1 (Dkc1) from Mus musculus (Mouse).